A 513-amino-acid chain; its full sequence is Maturase K (513 aa).

This sequence belongs to the intron maturase 2 family. MatK subfamily.

The protein localises to the plastid. The protein resides in the chloroplast. Its function is as follows. Usually encoded in the trnK tRNA gene intron. Probably assists in splicing its own and other chloroplast group II introns. The protein is Maturase K of Panicum capillare (Witchgrass).